The sequence spans 340 residues: Adenosine deaminase (340 aa).

Zn(2+) is bound by residues His15 and His17. Substrate is bound by residues His17, Asp19, and Gly172. His199 contributes to the Zn(2+) binding site. Glu202 serves as the catalytic Proton donor. Residue Asp279 coordinates Zn(2+).

Belongs to the metallo-dependent hydrolases superfamily. Adenosine and AMP deaminases family. Adenosine deaminase subfamily. The cofactor is Zn(2+).

The enzyme catalyses adenosine + H2O + H(+) = inosine + NH4(+). It carries out the reaction 2'-deoxyadenosine + H2O + H(+) = 2'-deoxyinosine + NH4(+). Catalyzes the hydrolytic deamination of adenosine and 2-deoxyadenosine. The sequence is that of Adenosine deaminase from Streptococcus agalactiae serotype III (strain NEM316).